Reading from the N-terminus, the 364-residue chain is Aminomethyltransferase (364 aa).

It belongs to the GcvT family. In terms of assembly, the glycine cleavage system is composed of four proteins: P, T, L and H.

The enzyme catalyses N(6)-[(R)-S(8)-aminomethyldihydrolipoyl]-L-lysyl-[protein] + (6S)-5,6,7,8-tetrahydrofolate = N(6)-[(R)-dihydrolipoyl]-L-lysyl-[protein] + (6R)-5,10-methylene-5,6,7,8-tetrahydrofolate + NH4(+). Its function is as follows. The glycine cleavage system catalyzes the degradation of glycine. In Shewanella loihica (strain ATCC BAA-1088 / PV-4), this protein is Aminomethyltransferase.